Consider the following 397-residue polypeptide: Elongation factor Tu (397 aa).

The region spanning 10–207 (LPHCNVGTIG…TLDSYIPQPE (198 aa)) is the tr-type G domain. Positions 19 to 26 (GHVDHGKT) are G1. 19 to 26 (GHVDHGKT) is a binding site for GTP. Thr26 lines the Mg(2+) pocket. The interval 60 to 64 (GITIN) is G2. A G3 region spans residues 81-84 (DCPG). Residues 81 to 85 (DCPGH) and 136 to 139 (NKAD) each bind GTP. The interval 136-139 (NKAD) is G4. A G5 region spans residues 174–176 (SAR).

Belongs to the TRAFAC class translation factor GTPase superfamily. Classic translation factor GTPase family. EF-Tu/EF-1A subfamily. Monomer.

The protein resides in the cytoplasm. The enzyme catalyses GTP + H2O = GDP + phosphate + H(+). Functionally, GTP hydrolase that promotes the GTP-dependent binding of aminoacyl-tRNA to the A-site of ribosomes during protein biosynthesis. The chain is Elongation factor Tu from Pseudomonas syringae pv. tomato (strain ATCC BAA-871 / DC3000).